Here is a 473-residue protein sequence, read N- to C-terminus: Catalase easC (473 aa).

Residues 1 to 15 (MASEVSVASSGSEHS) show a composition bias toward low complexity. The segment at 1-31 (MASEVSVASSGSEHSGAQKCPFQDPGLSSMD) is disordered. His54 is an active-site residue. Tyr344 contributes to the heme binding site. The disordered stretch occupies residues 352 to 389 (LGPNNLDLPANRTKKLADGSRPEKAEMAPQKVPSQEHA). The segment covering 366 to 377 (KLADGSRPEKAE) has biased composition (basic and acidic residues).

The protein belongs to the catalase family. It depends on heme as a cofactor.

It functions in the pathway alkaloid biosynthesis; ergot alkaloid biosynthesis. In terms of biological role, catalase; part of the gene cluster that mediates the biosynthesis of fungal ergot alkaloid. DmaW catalyzes the first step of ergot alkaloid biosynthesis by condensing dimethylallyl diphosphate (DMAP) and tryptophan to form 4-dimethylallyl-L-tryptophan. The second step is catalyzed by the methyltransferase easF that methylates 4-dimethylallyl-L-tryptophan in the presence of S-adenosyl-L-methionine, resulting in the formation of 4-dimethylallyl-L-abrine. The catalase easC and the FAD-dependent oxidoreductase easE then transform 4-dimethylallyl-L-abrine to chanoclavine-I which is further oxidized by easD in the presence of NAD(+), resulting in the formation of chanoclavine-I aldehyde. Agroclavine dehydrogenase easG then mediates the conversion of chanoclavine-I aldehyde to agroclavine via a non-enzymatic adduct reaction: the substrate is an iminium intermediate that is formed spontaneously from chanoclavine-I aldehyde in the presence of glutathione. The presence of easA is not required to complete this reaction. Further conversion of agroclavine to paspalic acid is a two-step process involving oxidation of agroclavine to elymoclavine and of elymoclavine to paspalic acid, the second step being performed by the elymoclavine oxidase cloA. Paspalic acid is then further converted to D-lysergic acid. Ergopeptines are assembled from D-lysergic acid and three different amino acids by the D-lysergyl-peptide-synthetases composed each of a monomudular and a trimodular nonribosomal peptide synthetase subunit. LpsB and lpsC encode the monomodular subunits responsible for D-lysergic acid activation and incorporation into the ergopeptine backbone. LpsA1 and A2 subunits encode the trimodular nonribosomal peptide synthetase assembling the tripeptide portion of ergopeptines. LpsA1 is responsible for formation of the major ergopeptine, ergotamine, and lpsA2 for alpha-ergocryptine, the minor ergopeptine of the total alkaloid mixture elaborated by C.purpurea. D-lysergyl-tripeptides are assembled by the nonribosomal peptide synthetases and released as N-(D-lysergyl-aminoacyl)-lactams. Cyclolization of the D-lysergyl-tripeptides is performed by the Fe(2+)/2-ketoglutarate-dependent dioxygenase easH which introduces a hydroxyl group into N-(D-lysergyl-aminoacyl)-lactam at alpha-C of the aminoacyl residue followed by spontaneous condensation with the terminal lactam carbonyl group. The chain is Catalase easC from Claviceps purpurea (strain 20.1) (Ergot fungus).